Here is a 493-residue protein sequence, read N- to C-terminus: Dynein regulatory complex subunit 2 (493 aa).

2 coiled-coil regions span residues 99–163 (DSVI…RKLI) and 253–280 (KDEK…ILKG).

Belongs to the DRC2 family. As to quaternary structure, component of the nexin-dynein regulatory complex (N-DRC). Interacts with DRC1.

It localises to the cytoplasm. The protein localises to the cytoskeleton. The protein resides in the flagellum basal body. It is found in the cell projection. Its subcellular location is the cilium. It localises to the flagellum. The protein localises to the flagellum axoneme. In terms of biological role, component of the nexin-dynein regulatory complex (N-DRC), a key regulator of ciliary/flagellar motility which maintains the alignment and integrity of the distal axoneme and regulates microtubule sliding in motile axonemes. Plays a critical role in the assembly of N-DRC and also stabilizes the assembly of multiple inner dynein arms and radial spokes. Coassembles with DRC1 to form a central scaffold needed for assembly of the N-DRC and its attachment to the outer doublet microtubules. This is Dynein regulatory complex subunit 2 (Ccdc65) from Mus musculus (Mouse).